An 89-amino-acid polypeptide reads, in one-letter code: Small ribosomal subunit protein uS15c (89 aa).

The protein belongs to the universal ribosomal protein uS15 family. Part of the 30S ribosomal subunit.

Its subcellular location is the plastid. It is found in the organellar chromatophore. This is Small ribosomal subunit protein uS15c (rps15) from Paulinella chromatophora.